Reading from the N-terminus, the 213-residue chain is Uracil phosphoribosyltransferase (213 aa).

5-phospho-alpha-D-ribose 1-diphosphate contacts are provided by residues arginine 78, arginine 103, and 131 to 139 (DPMLATGGT). Uracil is bound by residues isoleucine 197 and 202–204 (GDA). Aspartate 203 is a binding site for 5-phospho-alpha-D-ribose 1-diphosphate.

It belongs to the UPRTase family. Mg(2+) serves as cofactor.

The enzyme catalyses UMP + diphosphate = 5-phospho-alpha-D-ribose 1-diphosphate + uracil. The protein operates within pyrimidine metabolism; UMP biosynthesis via salvage pathway; UMP from uracil: step 1/1. Its activity is regulated as follows. Allosterically activated by GTP. Catalyzes the conversion of uracil and 5-phospho-alpha-D-ribose 1-diphosphate (PRPP) to UMP and diphosphate. In Bifidobacterium animalis subsp. lactis (strain AD011), this protein is Uracil phosphoribosyltransferase.